The primary structure comprises 418 residues: Glutamyl-tRNA(Gln) amidotransferase subunit D (418 aa).

The region spanning 74–405 (KNISILSTGG…EESKELMSKN (332 aa)) is the Asparaginase/glutaminase domain. Catalysis depends on residues threonine 84, threonine 160, aspartate 161, and lysine 237.

Belongs to the asparaginase 1 family. GatD subfamily. In terms of assembly, heterodimer of GatD and GatE.

It carries out the reaction L-glutamyl-tRNA(Gln) + L-glutamine + ATP + H2O = L-glutaminyl-tRNA(Gln) + L-glutamate + ADP + phosphate + H(+). Allows the formation of correctly charged Gln-tRNA(Gln) through the transamidation of misacylated Glu-tRNA(Gln) in organisms which lack glutaminyl-tRNA synthetase. The reaction takes place in the presence of glutamine and ATP through an activated gamma-phospho-Glu-tRNA(Gln). The GatDE system is specific for glutamate and does not act on aspartate. This is Glutamyl-tRNA(Gln) amidotransferase subunit D from Methanococcus maripaludis (strain C5 / ATCC BAA-1333).